The chain runs to 305 residues: C alpha-dehydrogenase (305 aa).

Phe-10–Val-34 serves as a coordination point for NAD(+). Ser-144 is a substrate binding site. The active-site Proton acceptor is Tyr-157.

The protein belongs to the short-chain dehydrogenases/reductases (SDR) family.

It participates in secondary metabolite metabolism; lignin degradation. Its function is as follows. Catalyzes the C alpha dehydrogenation of arylglycerol-beta-aryl ether (C alpha alcohol type) (compound IV). This is C alpha-dehydrogenase (ligD) from Sphingobium sp. (strain NBRC 103272 / SYK-6).